The primary structure comprises 287 residues: Polyamine aminopropyltransferase (287 aa).

The PABS domain occupies 5 to 238 (EIWYETLHAN…GIMTFAWASN (234 aa)). S-methyl-5'-thioadenosine is bound at residue Gln33. Spermidine is bound by residues His64 and Asp88. S-methyl-5'-thioadenosine-binding positions include Glu108 and 140 to 141 (DG). Catalysis depends on Asp158, which acts as the Proton acceptor. A spermidine-binding site is contributed by 158-161 (DCTD). Residue Pro165 coordinates S-methyl-5'-thioadenosine.

This sequence belongs to the spermidine/spermine synthase family. As to quaternary structure, homodimer or homotetramer.

The protein localises to the cytoplasm. It carries out the reaction S-adenosyl 3-(methylsulfanyl)propylamine + putrescine = S-methyl-5'-thioadenosine + spermidine + H(+). The protein operates within amine and polyamine biosynthesis; spermidine biosynthesis; spermidine from putrescine: step 1/1. Catalyzes the irreversible transfer of a propylamine group from the amino donor S-adenosylmethioninamine (decarboxy-AdoMet) to putrescine (1,4-diaminobutane) to yield spermidine. This Pectobacterium carotovorum subsp. carotovorum (strain PC1) protein is Polyamine aminopropyltransferase.